The sequence spans 313 residues: 7,8-didemethyl-8-hydroxy-5-deazariboflavin synthase (313 aa).

Positions 4-235 (ITYSPAYTLV…AEITLQIPPN (232 aa)) constitute a Radical SAM core domain. The [4Fe-4S] cluster site is built by Cys18, Cys22, and Cys25.

Belongs to the radical SAM superfamily. CofG family. Consists of two subunits, CofG and CofH. The cofactor is [4Fe-4S] cluster.

It carries out the reaction 5-amino-5-(4-hydroxybenzyl)-6-(D-ribitylimino)-5,6-dihydrouracil + S-adenosyl-L-methionine = 7,8-didemethyl-8-hydroxy-5-deazariboflavin + 5'-deoxyadenosine + L-methionine + NH4(+) + H(+). Its pathway is cofactor biosynthesis; coenzyme F0 biosynthesis. In terms of biological role, catalyzes the radical-mediated synthesis of 7,8-didemethyl-8-hydroxy-5-deazariboflavin from 5-amino-5-(4-hydroxybenzyl)-6-(D-ribitylimino)-5,6-dihydrouracil. The sequence is that of 7,8-didemethyl-8-hydroxy-5-deazariboflavin synthase from Synechocystis sp. (strain ATCC 27184 / PCC 6803 / Kazusa).